The sequence spans 222 residues: Probable elongation factor 1-beta (222 aa).

The interval 90–111 (KPAADDDDDVDLFGSDDEEDEE) is disordered. A compositionally biased stretch (acidic residues) spans 94–111 (DDDDDVDLFGSDDEEDEE). S104 carries the post-translational modification Phosphoserine.

Belongs to the EF-1-beta/EF-1-delta family. In terms of assembly, EF-1 is composed of 4 subunits: alpha, beta, beta' and gamma. Post-translationally, phosphorylation affects the GDP/GTP exchange rate.

Its function is as follows. EF-1-beta and EF-1-delta stimulate the exchange of GDP bound to EF-1-alpha to GTP. The polypeptide is Probable elongation factor 1-beta (Drosophila melanogaster (Fruit fly)).